The sequence spans 392 residues: Formate-dependent phosphoribosylglycinamide formyltransferase (392 aa).

Residues 22-23 (EL) and Glu-82 contribute to the N(1)-(5-phospho-beta-D-ribosyl)glycinamide site. ATP-binding positions include Arg-114, Lys-155, 160 to 165 (SSGKGQ), 195 to 198 (EGVV), and Glu-203. The ATP-grasp domain maps to 119 to 308 (RLAAEELGLP…EFALHVRAFL (190 aa)). Positions 267 and 279 each coordinate Mg(2+). N(1)-(5-phospho-beta-D-ribosyl)glycinamide-binding positions include Asp-286, Lys-355, and 362-363 (RR).

Belongs to the PurK/PurT family. Homodimer.

It carries out the reaction N(1)-(5-phospho-beta-D-ribosyl)glycinamide + formate + ATP = N(2)-formyl-N(1)-(5-phospho-beta-D-ribosyl)glycinamide + ADP + phosphate + H(+). It functions in the pathway purine metabolism; IMP biosynthesis via de novo pathway; N(2)-formyl-N(1)-(5-phospho-D-ribosyl)glycinamide from N(1)-(5-phospho-D-ribosyl)glycinamide (formate route): step 1/1. In terms of biological role, involved in the de novo purine biosynthesis. Catalyzes the transfer of formate to 5-phospho-ribosyl-glycinamide (GAR), producing 5-phospho-ribosyl-N-formylglycinamide (FGAR). Formate is provided by PurU via hydrolysis of 10-formyl-tetrahydrofolate. In Salmonella arizonae (strain ATCC BAA-731 / CDC346-86 / RSK2980), this protein is Formate-dependent phosphoribosylglycinamide formyltransferase.